The chain runs to 446 residues: Na(+)-translocating NADH-quinone reductase subunit A (446 aa).

It belongs to the NqrA family. As to quaternary structure, composed of six subunits; NqrA, NqrB, NqrC, NqrD, NqrE and NqrF.

The enzyme catalyses a ubiquinone + n Na(+)(in) + NADH + H(+) = a ubiquinol + n Na(+)(out) + NAD(+). In terms of biological role, NQR complex catalyzes the reduction of ubiquinone-1 to ubiquinol by two successive reactions, coupled with the transport of Na(+) ions from the cytoplasm to the periplasm. NqrA to NqrE are probably involved in the second step, the conversion of ubisemiquinone to ubiquinol. This Pasteurella multocida (strain Pm70) protein is Na(+)-translocating NADH-quinone reductase subunit A.